A 351-amino-acid chain; its full sequence is Phosphoribosylformylglycinamidine cyclo-ligase (351 aa).

This sequence belongs to the AIR synthase family.

The protein localises to the cytoplasm. It catalyses the reaction 2-formamido-N(1)-(5-O-phospho-beta-D-ribosyl)acetamidine + ATP = 5-amino-1-(5-phospho-beta-D-ribosyl)imidazole + ADP + phosphate + H(+). Its pathway is purine metabolism; IMP biosynthesis via de novo pathway; 5-amino-1-(5-phospho-D-ribosyl)imidazole from N(2)-formyl-N(1)-(5-phospho-D-ribosyl)glycinamide: step 2/2. In Burkholderia pseudomallei (strain 1710b), this protein is Phosphoribosylformylglycinamidine cyclo-ligase.